The sequence spans 624 residues: uncharacterized protein (624 aa).

Residues 108–138 (PTAWSGMESDSTASERSLPQRTDTTSVSSQY) are disordered. S112 bears the Phosphoserine mark. The segment covering 115–138 (ESDSTASERSLPQRTDTTSVSSQY) has biased composition (polar residues). S205 carries the phosphoserine modification. 2 disordered regions span residues 217 to 236 (LMES…PGTR) and 305 to 329 (KREC…PVSE).

This is an uncharacterized protein from Rattus norvegicus (Rat).